The following is a 154-amino-acid chain: Ribosome maturation factor RimP (154 aa).

This sequence belongs to the RimP family.

It localises to the cytoplasm. Its function is as follows. Required for maturation of 30S ribosomal subunits. This is Ribosome maturation factor RimP from Natranaerobius thermophilus (strain ATCC BAA-1301 / DSM 18059 / JW/NM-WN-LF).